A 589-amino-acid chain; its full sequence is Aspartate--tRNA ligase (589 aa).

Glu175 is a binding site for L-aspartate. The aspartate stretch occupies residues 199-202 (QIFK). L-aspartate is bound at residue Arg221. Residues 221–223 (RDE) and Gln230 each bind ATP. His449 contacts L-aspartate. Residue Glu483 participates in ATP binding. L-aspartate is bound at residue Arg490. 535–538 (GLDR) contributes to the ATP binding site.

Belongs to the class-II aminoacyl-tRNA synthetase family. Type 1 subfamily. As to quaternary structure, homodimer.

Its subcellular location is the cytoplasm. It catalyses the reaction tRNA(Asp) + L-aspartate + ATP = L-aspartyl-tRNA(Asp) + AMP + diphosphate. Functionally, catalyzes the attachment of L-aspartate to tRNA(Asp) in a two-step reaction: L-aspartate is first activated by ATP to form Asp-AMP and then transferred to the acceptor end of tRNA(Asp). This Shouchella clausii (strain KSM-K16) (Alkalihalobacillus clausii) protein is Aspartate--tRNA ligase.